The chain runs to 684 residues: uncharacterized protein (684 aa).

The 186-residue stretch at 54 to 239 (LKYLYNKKDV…LLFNRDFEVV (186 aa)) folds into the Helicase ATP-binding domain. 67 to 74 (TSTASGKS) is an ATP binding site. The DEVH box motif lies at 181–184 (DELH). One can recognise a Helicase C-terminal domain in the interval 264–419 (LLRRLIENLV…YMPVNIKNRF (156 aa)).

The protein belongs to the helicase family.

This is an uncharacterized protein from Methanocaldococcus jannaschii (strain ATCC 43067 / DSM 2661 / JAL-1 / JCM 10045 / NBRC 100440) (Methanococcus jannaschii).